We begin with the raw amino-acid sequence, 50 residues long: METTNFGFIISLLFVGIPTIFLVGLYISTSDGEKSSFFSDSSKGKLGPKS.

A helical transmembrane segment spans residues 7-27 (GFIISLLFVGIPTIFLVGLYI). A disordered region spans residues 31–50 (DGEKSSFFSDSSKGKLGPKS).

The protein belongs to the PsbM family. As to quaternary structure, PSII is composed of 1 copy each of membrane proteins PsbA, PsbB, PsbC, PsbD, PsbE, PsbF, PsbH, PsbI, PsbJ, PsbK, PsbL, PsbM, PsbT, PsbX, PsbY, Psb30/Ycf12, peripheral proteins PsbO, CyanoQ (PsbQ), PsbU, PsbV and a large number of cofactors. It forms dimeric complexes.

It is found in the cellular thylakoid membrane. One of the components of the core complex of photosystem II (PSII). PSII is a light-driven water:plastoquinone oxidoreductase that uses light energy to abstract electrons from H(2)O, generating O(2) and a proton gradient subsequently used for ATP formation. It consists of a core antenna complex that captures photons, and an electron transfer chain that converts photonic excitation into a charge separation. This subunit is found at the monomer-monomer interface. In Prochlorococcus marinus (strain SARG / CCMP1375 / SS120), this protein is Photosystem II reaction center protein M.